Consider the following 376-residue polypeptide: Cyclin-dependent kinase 9-A (376 aa).

The region spanning 19–319 (YERLAKIGQG…SDDALNNDFF (301 aa)) is the Protein kinase domain. ATP is bound by residues 25 to 33 (IGQGTFGEV) and Lys-48. Asp-153 serves as the catalytic Proton acceptor. A disordered region spans residues 345 to 376 (PPRRRGGHMPQQPANQARNPAATNQSEFERVF). Positions 354 to 369 (PQQPANQARNPAATNQ) are enriched in low complexity.

The protein belongs to the protein kinase superfamily. CMGC Ser/Thr protein kinase family. CDC2/CDKX subfamily. In terms of assembly, associates with cyclin-T to form P-TEFb.

The protein resides in the nucleus. It carries out the reaction L-seryl-[protein] + ATP = O-phospho-L-seryl-[protein] + ADP + H(+). It catalyses the reaction L-threonyl-[protein] + ATP = O-phospho-L-threonyl-[protein] + ADP + H(+). The enzyme catalyses [DNA-directed RNA polymerase] + ATP = phospho-[DNA-directed RNA polymerase] + ADP + H(+). Functionally, member of the cyclin-dependent kinase pair (CDK9/cyclin-T) complex, also called positive transcription elongation factor B (P-TEFb), which is proposed to facilitate the transition from abortive to production elongation by phosphorylating the CTD (C-terminal domain) of the large subunit of RNA polymerase II (RNAP II) and SUPT5H. This chain is Cyclin-dependent kinase 9-A (cdk9-a), found in Xenopus laevis (African clawed frog).